Reading from the N-terminus, the 121-residue chain is Ribonuclease P protein component (121 aa).

The protein belongs to the RnpA family. As to quaternary structure, consists of a catalytic RNA component (M1 or rnpB) and a protein subunit.

It catalyses the reaction Endonucleolytic cleavage of RNA, removing 5'-extranucleotides from tRNA precursor.. RNaseP catalyzes the removal of the 5'-leader sequence from pre-tRNA to produce the mature 5'-terminus. It can also cleave other RNA substrates such as 4.5S RNA. The protein component plays an auxiliary but essential role in vivo by binding to the 5'-leader sequence and broadening the substrate specificity of the ribozyme. The chain is Ribonuclease P protein component from Erythrobacter litoralis (strain HTCC2594).